The sequence spans 483 residues: MGFTLAIVGRPNVGKSTLFNRLVGRKLALVDDLPGVTRDRRIHDAKLYDLKFQLIDTAGLEEAANDSLEARMRAQTEAAISEADAVLFVIDAKAGITPADSTFAEAVRRSGKPVVLVANKAEARGSEAGMYDAFQLGLGEPCPISAEHGQGMPDLRDAIVELLGEERVFAEERQEEAADEVFTPAAVGALVGDDIEDPDAEEIPAYDATKPLRIAIVGRPNAGKSTLINTMLGEDRLLTGPEAGITRDSISADWEWHGRKIKLFDTAGMRRKARVQEKLEKLSVADGLRAIRFAEVVIIVLDATIPFEKQDLQIADLIIREGRAPVIAFNKWDLIEDRQMVLADLYEKTARLLPQVRGLRAVPISGERGQGIDKLMENVVKTHEIWNRRISTGRLNRWLEGVIAHQPPPAVSGRRLKVKYMTQVKTRPPGFVVSCSRPDAMPQSYVRYLINGLRETFDMPGVPIRLSLRTSDNPFAGRAKKKK.

EngA-type G domains are found at residues 3–167 and 212–387; these read FTLA…GEER and LRIA…EIWN. Residues 9 to 16, 56 to 60, 119 to 122, 218 to 225, 265 to 269, and 330 to 333 contribute to the GTP site; these read GRPNVGKS, DTAGL, NKAE, GRPNAGKS, DTAGM, and NKWD. The KH-like domain occupies 388–472; sequence RRISTGRLNR…PIRLSLRTSD (85 aa).

Belongs to the TRAFAC class TrmE-Era-EngA-EngB-Septin-like GTPase superfamily. EngA (Der) GTPase family. Associates with the 50S ribosomal subunit.

Its function is as follows. GTPase that plays an essential role in the late steps of ribosome biogenesis. The chain is GTPase Der from Brucella suis (strain ATCC 23445 / NCTC 10510).